The primary structure comprises 118 residues: Aspartate 1-decarboxylase (118 aa).

The active-site Schiff-base intermediate with substrate; via pyruvic acid is Ser-25. Ser-25 is subject to Pyruvic acid (Ser). Thr-57 is a substrate binding site. The active-site Proton donor is the Tyr-58. Residue 73 to 75 coordinates substrate; it reads GAA.

Belongs to the PanD family. Heterooctamer of four alpha and four beta subunits. It depends on pyruvate as a cofactor. Post-translationally, is synthesized initially as an inactive proenzyme, which is activated by self-cleavage at a specific serine bond to produce a beta-subunit with a hydroxyl group at its C-terminus and an alpha-subunit with a pyruvoyl group at its N-terminus.

The protein localises to the cytoplasm. The enzyme catalyses L-aspartate + H(+) = beta-alanine + CO2. It functions in the pathway cofactor biosynthesis; (R)-pantothenate biosynthesis; beta-alanine from L-aspartate: step 1/1. Its function is as follows. Catalyzes the pyruvoyl-dependent decarboxylation of aspartate to produce beta-alanine. This is Aspartate 1-decarboxylase from Phenylobacterium zucineum (strain HLK1).